The primary structure comprises 829 residues: MFEPYVKIKKKRSVNEIYENENLEQQQHHLQQQQQQPATSDNCCCENGEPQNAPEVATATVAATSVAATSAAATVATGAAASSSSSGNCSRLQQLISTPPVLLRRSSLQQQQHQQQQHHPHTPAATATPPQQQQQQQAAPSVLQQHLGHLNYESGATAAAAATAAAAAATVATSRSGSATLAQHLATPSNILQAAFGSSNLQHILTRSAPSPSSSAISSNNCSSACAGNTHYNGGNSNSGSSSSNSNHHSNSIIASRLFGAASSSSSSSSSSASASSSSVAASSSSSSHHLHSHHSALTNSITNRINQSIRRHLNQQQHHHPLSASSSSASASPSASTSSSSSYQQSSVQQQHYNCAHPAQQQQHHHHHHSSSSSSSSSSSSSHHHHNSSSSSNSNNQQQPQQSPLCLVLLVKCPNSKEFCNAAANFCDKRLPVNECQASQTARVTSNLHASSSTMAVSRVPSPPLPEVNTPVAENWCYTQVKVVKFSYMWTINNFSFCREEMGEVLKSSTFSAGANDKLKWCLRVNPKGLDEESKDYLSLYLLLVSCNKSEVRAKFKFSILNAKREETKAMESQRAYRFVQGKDWGFKKFIRRDFLLDEANGLLPEDKLTIFCEVSVVADSVNISGQSNIVQFKVPECKLSEDLGNLFDNEKFSDVTLSVGGREFQAHKAILAARSDVFAAMFEHEMEERKLNRVAITDVDHEVLKEMLRFIYTGKAPNLEKMADDLLAAADKYALEKLKVMCEEALCVNLSVETAAETLILADLHSADQLKAQTIDFINTHATDVMETSGWQNMITTHSHLIAEAFRALATQQIPPIGPPRKRVKMS.

Composition is skewed to low complexity over residues Glu-24–Gln-36, Thr-122–Pro-140, and Ser-266–Ser-288. Disordered regions lie at residues Glu-24 to Asn-47, Ser-106 to Val-142, Ser-266 to Ser-296, and His-313 to Gln-400. The span at His-313–Pro-322 shows a compositional bias: basic residues. 3 stretches are compositionally biased toward low complexity: residues Leu-323–His-353, Ser-372–Ser-382, and Ser-389–Gln-400. The 131-residue stretch at Lys-486–Val-616 folds into the MATH domain. In terms of domain architecture, BTB spans Ser-655–Glu-722.

Belongs to the Tdpoz family. Interacts with ci and gft/CUL3. Expressed near the anterio-posterior compartment boundary of antenna, leg and wing disks.

It localises to the nucleus. The protein operates within protein modification; protein ubiquitination. Functionally, involved in segment polarity. In complex with gft/CUL3, promotes ubiquitination of ci and its subsequent degradation by the proteasome, which results in hh signaling attenuation. This regulation may be important during eye formation for proper packing of ommatidia into a hexagonal array. The polypeptide is Protein roadkill (rdx) (Drosophila melanogaster (Fruit fly)).